The primary structure comprises 231 residues: uncharacterized protein (231 aa).

The SWIM-type zinc finger occupies 43 to 76; that stretch reads YKVKVDLDNNYFGLCTCQYKYNCKHAYALIEAYE.

This is an uncharacterized protein from Methanocaldococcus jannaschii (strain ATCC 43067 / DSM 2661 / JAL-1 / JCM 10045 / NBRC 100440) (Methanococcus jannaschii).